We begin with the raw amino-acid sequence, 451 residues long: D-inositol 3-phosphate glycosyltransferase (451 aa).

Position 37 (His37) interacts with 1D-myo-inositol 3-phosphate. Residues 43–44 (QP) and Gly51 each bind UDP-N-acetyl-alpha-D-glucosamine. 1D-myo-inositol 3-phosphate contacts are provided by residues 48 to 53 (DAGGMN), Lys106, Tyr138, Thr162, and Arg182. Residues Arg259, Lys264, and Arg323 each coordinate UDP-N-acetyl-alpha-D-glucosamine. Mg(2+) contacts are provided by Tyr332, Arg333, and Ala335. 2 residues coordinate UDP-N-acetyl-alpha-D-glucosamine: Glu345 and Glu353. Position 359 (Thr359) interacts with Mg(2+).

It belongs to the glycosyltransferase group 1 family. MshA subfamily. Homodimer.

The catalysed reaction is 1D-myo-inositol 3-phosphate + UDP-N-acetyl-alpha-D-glucosamine = 1D-myo-inositol 2-acetamido-2-deoxy-alpha-D-glucopyranoside 3-phosphate + UDP + H(+). Functionally, catalyzes the transfer of a N-acetyl-glucosamine moiety to 1D-myo-inositol 3-phosphate to produce 1D-myo-inositol 2-acetamido-2-deoxy-glucopyranoside 3-phosphate in the mycothiol biosynthesis pathway. The polypeptide is D-inositol 3-phosphate glycosyltransferase (Corynebacterium kroppenstedtii (strain DSM 44385 / JCM 11950 / CIP 105744 / CCUG 35717)).